Reading from the N-terminus, the 156-residue chain is Snaclec stejaggregin-B subunit alpha (156 aa).

An N-terminal signal peptide occupies residues 1–23 (MGRFISVSFGLLVVFLSLSGTGA). 3 disulfides stabilise this stretch: Cys25/Cys36, Cys53/Cys150, and Cys125/Cys142. The 120-residue stretch at 32-151 (FKQYCYQIIK…CEQKHLFMCK (120 aa)) folds into the C-type lectin domain.

This sequence belongs to the snaclec family. As to quaternary structure, heteromultimer; disulfide-linked. In terms of tissue distribution, expressed by the venom gland.

The protein localises to the secreted. Functionally, interferes with one step of hemostasis (modulation of platelet aggregation, or coagulation cascade, for example). This Trimeresurus stejnegeri (Chinese green tree viper) protein is Snaclec stejaggregin-B subunit alpha.